Here is a 400-residue protein sequence, read N- to C-terminus: Ribosomal RNA dihydrouridine synthase (400 aa).

The FAD site is built by Ala-14, Asp-33, Asn-34, Arg-40, Gly-46, Asn-51, Val-131, Glu-367, and Phe-380.

Belongs to the BaiN/RdsA family. RdsA subfamily. Requires FAD as cofactor.

It catalyses the reaction a 5,6-dihydrouridine in mRNA + NAD(+) = a uridine in mRNA + NADH + H(+). Functionally, catalyzes the synthesis of 5,6-dihydrouridine (D) at position 2449 in 23S rRNA. Can use NADH as a source of reducing equivalents but not NADPH. This chain is Ribosomal RNA dihydrouridine synthase, found in Escherichia coli (strain K12).